We begin with the raw amino-acid sequence, 175 residues long: tRNA-acetylating toxin 3 (175 aa).

Positions 95, 97, 103, 105, 107, 108, 133, 138, 141, and 142 each coordinate acetyl-CoA. Tyr-143 is an active-site residue. 2 residues coordinate acetyl-CoA: Gly-145 and Phe-146.

The protein belongs to the acetyltransferase family. GNAT subfamily. In terms of assembly, homodimer (in absence of antitoxin); has a condensed and elongated form. Forms a complex with cognate antitoxin TacA3. Forms a 4:2 antitoxin:toxin complex with cognate antitoxin TacA3. Forms a 4:4 antitoxin:toxin complex with promoter DNA, where 2 TacT3 dimers bridge 2 TacA3 dimers. Only TacA3 contacts promoter DNA in the octomeric form. TacT3 may contact DNA in the hexameric form.

It catalyses the reaction glycyl-tRNA(Gly) + acetyl-CoA = N-acetylglycyl-tRNA(Gly) + CoA + H(+). Its function is as follows. Toxic component of a type II toxin-antitoxin (TA) system. Acetylates tRNA and inhibits translation. Acetylates only Gly-tRNA on all 3 Gly-tRNA(Gly) isoacceptors in situ. In vitro acetylates mainly Ile/Leu and Gly. Overexpression during the lag phase of a tacA3-tacT3 deletion strain leads to a 150-fold increase in persister cells in the presence of cefotaxime and a non-growth state in the absence of antibiotic. Persister cell formation and the growth defect are neutralized by cognate antitoxin TacA3, but not by TacA1 or TacA2. Plays a role in persister cell formation. Functionally, the TacA3-TacT3 complex both represses and derepresses expression of its own operon. The hexameric 4:2 TacA3-TacT3 complex binds promoter DNA and represses its transcription; both subunits are required. The octomeric 4:4 TacA3-TacT3 complex derepresses the operon. The shift from hexameric to octomeric complex probably alters DNA-binding, leading to dissociation from the operator DNA and derepression. The polypeptide is tRNA-acetylating toxin 3 (Salmonella typhimurium (strain 14028s / SGSC 2262)).